Consider the following 519-residue polypeptide: Protein disulfide-isomerase A5 (519 aa).

The N-terminal stretch at 1–21 is a signal peptide; sequence MARAGPAWLLLAIWVVLPSWL. Cystine bridges form between Cys85/Cys94, Cys182/Cys185, Cys305/Cys308, and Cys426/Cys429. Thioredoxin domains lie at 134–261, 270–384, and 378–506; these read FLKD…NPQP, PWAD…NPEA, and WMQN…ALRE. Residues 516–519 carry the Prevents secretion from ER motif; it reads KEEL.

It belongs to the protein disulfide isomerase family. As to quaternary structure, interacts with CALR (via P-domain).

The protein resides in the endoplasmic reticulum lumen. The catalysed reaction is Catalyzes the rearrangement of -S-S- bonds in proteins.. This Homo sapiens (Human) protein is Protein disulfide-isomerase A5 (PDIA5).